The chain runs to 489 residues: Glycogen synthase (489 aa).

Lys15 is an ADP-alpha-D-glucose binding site.

This sequence belongs to the glycosyltransferase 1 family. Bacterial/plant glycogen synthase subfamily.

It catalyses the reaction [(1-&gt;4)-alpha-D-glucosyl](n) + ADP-alpha-D-glucose = [(1-&gt;4)-alpha-D-glucosyl](n+1) + ADP + H(+). Its pathway is glycan biosynthesis; glycogen biosynthesis. Functionally, synthesizes alpha-1,4-glucan chains using ADP-glucose. The chain is Glycogen synthase from Francisella tularensis subsp. novicida (strain U112).